The primary structure comprises 217 residues: Nucleoredoxin-like protein 1 (217 aa).

One can recognise a Thioredoxin domain in the interval 1–164 (MASLFSGRIL…AAELLDRSFL (164 aa)). The segment covering 188-204 (VDRDVGRERGRNGRDSG) has biased composition (basic and acidic residues). The segment at 188–217 (VDRDVGRERGRNGRDSGDPQGDAGTRAELW) is disordered.

The protein belongs to the nucleoredoxin family. Interacts with isoform 1 of BSG. As to expression, expressed in the retina (at protein level). Expressed predominantly by photoreceptors in both the inner and outer nuclear layer (at protein level). Not expressed in the testis, spleen, intestine, lung, cerebellum, or kidney.

The protein localises to the cell projection. Its subcellular location is the cilium. The protein resides in the photoreceptor outer segment. In terms of biological role, plays an important role in retinal cone photoreceptor survival. In association with glucose transporter SLC16A1/GLUT1 and BSG, promotes retinal cone survival by enhancing aerobic glycolysis and accelerating the entry of glucose into photoreceptors. May play a role in cone cell viability, slowing down cone degeneration, does not seem to play a role in degenerating rods. The sequence is that of Nucleoredoxin-like protein 1 (Nxnl1) from Mus musculus (Mouse).